A 423-amino-acid chain; its full sequence is Putative UPF0496 protein 5 (423 aa).

Basic residues predominate over residues Met-1 to Ala-14. The tract at residues Met-1–Cys-37 is disordered. 2 helical membrane passes run Ile-224–Ala-244 and Pro-247–Met-267.

It belongs to the UPF0496 family.

The protein resides in the membrane. This is Putative UPF0496 protein 5 from Oryza sativa subsp. japonica (Rice).